The following is a 1708-amino-acid chain: Rapamycin-insensitive companion of mTOR (1708 aa).

An interaction with NBN region spans residues 1–789; that stretch reads MAAIGRGRSL…DKANLHALIQ (789 aa). Serine 21, serine 35, and serine 265 each carry phosphoserine. A Glycyl lysine isopeptide (Lys-Gly) (interchain with G-Cter in ubiquitin) cross-link involves residue lysine 274. Residues 521–570 form a ribosome-binding domain region; the sequence is LKDTEEALLINLRDSQVLQHKENLEWNWNLIGTILKWPNVNLRNYKDEQL. ATP contacts are provided by asparagine 543, arginine 572, and arginine 576. The disordered stretch occupies residues 1022–1041; that stretch reads LSLNSESTSSRHNSESESVP. Lysine 1092 and lysine 1095 each carry N6-acetyllysine. Residue threonine 1103 is modified to Phosphothreonine. Residues 1103–1134 form a disordered region; sequence TLPNKKHRSSSDPKGGKLSSESKTSNRRIRTL. N6-acetyllysine is present on residues lysine 1116, lysine 1119, and lysine 1125. Position 1135 is a phosphothreonine; by RPS6KB1 (threonine 1135). A phosphoserine mark is found at serine 1138, serine 1162, and serine 1219. Residues 1204–1252 form a disordered region; it reads VVESSTSSHMKIRSQSFNTDTTTSGISSMSSSPSRETVGVDATTMDTDC. Residues 1206–1221 are compositionally biased toward polar residues; the sequence is ESSTSSHMKIRSQSFN. The span at 1222-1240 shows a compositional bias: low complexity; that stretch reads TDTTTSGISSMSSSPSRET. Serine 1235 carries the phosphoserine; by GSK3-beta modification. Position 1271 is a phosphothreonine (threonine 1271). Residues serine 1274, serine 1278, serine 1282, and serine 1284 each carry the phosphoserine modification. A compositionally biased stretch (low complexity) spans 1275 to 1288; the sequence is NHLSLSKSNSVSLV. Residues 1275–1298 are disordered; sequence NHLSLSKSNSVSLVPPGSSHTLPR. Threonine 1295 carries the phosphothreonine modification. Phosphoserine is present on residues serine 1302 and serine 1313. A Phosphothreonine modification is found at threonine 1332. 2 positions are modified to phosphoserine: serine 1346 and serine 1353. Position 1376 is a phosphothreonine (threonine 1376). Serine 1385 is subject to Phosphoserine. Residue tyrosine 1386 is modified to Phosphotyrosine. 3 positions are modified to phosphoserine: serine 1388, serine 1396, and serine 1411. Residues histidine 1515, cysteine 1520, and cysteine 1523 each contribute to the Zn(2+) site. Residues serine 1571, serine 1574, serine 1577, and serine 1591 each carry the phosphoserine modification. Residue cysteine 1651 participates in Zn(2+) binding. Threonine 1695 carries the phosphothreonine; by GSK3-alpha and GSK3-beta modification.

The protein belongs to the RICTOR family. In terms of assembly, component of the mechanistic target of rapamycin complex 2 (mTORC2), consisting in two heterotretramers composed of MTOR, MLST8, RICTOR and MAPKAP1/SIN1. The mTORC2 core complex associates with PRR5/PROTOR1 and/or PRR5L/PROTOR2. Contrary to mTORC1, mTORC2 does not bind to and is not sensitive to FKBP12-rapamycin. Binds directly to MTOR and PRR5 within the TORC2 complex; interaction with MTOR is enhanced by deubiquitination of RICTOR by USP9X. Interaction with MAPKAP1 is not enhanced by RICTOR deubiquitination by USP9X. Interacts with CCDC28B. Interacts with NBN. Interacts with SIK3. Interacts with NCKAP1L. Interacts with kinases GSK3A and GSK3B; the interactions lead to phosphorylation of RICTOR at Thr-1695 which facilitates its FBXW7-mediated ubiquitination and subsequent degradation. Interacts with FBXW7; the interaction is enhanced by GSK3-mediated phosphorylation of Thr-1695 and results in RICTOR ubiquitination and degradation. Interacts with ARMH4 (via cytoplasmic tail); this interaction bridges ARMH4 to the mTORC2 complex and inhibits the mTORC2 kinase activity. Interacts with UBXN2A. Interacts with TSPAN8. (Microbial infection) Interacts with vaccinia virus protein F17; this interaction dysregulates MTOR. Post-translationally, phosphorylated by MTOR; when part of mTORC2. Phosphorylated at Thr-1135 by RPS6KB1 downstream of the mTORC1 complex: phosphorylation of RICTOR inhibits mTORC2 signaling by creating a binding site for 14-3-3 proteins. Phosphorylated at Thr-1695 by GSK3A and GSK3B which facilitates RICTOR ubiquitination and subsequent degradation. Phosphorylated at Ser-1235 by GSK3B in response to endoplasmic stress, inhibiting mTORC2 signaling. Ubiquitinated by the SCF(FBXW7) complex, leading to its degradation by the proteasome. Deubiquitinated by USP9X; deubiquitination stabilizes RICTOR and enhances its binding to MTOR, thus promoting mTORC2 complex assembly. In terms of processing, acetylated by EP300/p300 in response to glucose, leading to activate the mTORC2 complex. Acetylation by BLOC1S1/GCN5L1 in response to hypotoxic stress protects RICTOR against ubiquitination and subsequent degradation by the proteasome.

Its subcellular location is the cell membrane. It localises to the endoplasmic reticulum membrane. It is found in the lysosome membrane. Functionally, component of the mechanistic target of rapamycin complex 2 (mTORC2), which transduces signals from growth factors to pathways involved in proliferation, cytoskeletal organization, lipogenesis and anabolic output. In response to growth factors, mTORC2 phosphorylates and activates AGC protein kinase family members, including AKT (AKT1, AKT2 and AKT3), PKC (PRKCA, PRKCB and PRKCE) and SGK1. In contrast to mTORC1, mTORC2 is nutrient-insensitive. Within the mTORC2 complex, RICTOR probably acts as a molecular adapter. RICTOR is responsible for the FKBP12-rapamycin-insensitivity of mTORC2. mTORC2 plays a critical role in AKT1 activation by mediating phosphorylation of different sites depending on the context, such as 'Thr-450', 'Ser-473', 'Ser-477' or 'Thr-479', facilitating the phosphorylation of the activation loop of AKT1 on 'Thr-308' by PDPK1/PDK1 which is a prerequisite for full activation. mTORC2 catalyzes the phosphorylation of SGK1 at 'Ser-422' and of PRKCA on 'Ser-657'. The mTORC2 complex also phosphorylates various proteins involved in insulin signaling, such as FBXW8 and IGF2BP1. mTORC2 acts upstream of Rho GTPases to regulate the actin cytoskeleton, probably by activating one or more Rho-type guanine nucleotide exchange factors. mTORC2 promotes the serum-induced formation of stress-fibers or F-actin. The polypeptide is Rapamycin-insensitive companion of mTOR (Homo sapiens (Human)).